Reading from the N-terminus, the 512-residue chain is MVNIRPEEISSIIRKQIEQYNQEVRVINIGTVLQVGDGIARIYGLDKVMSGELLEFEDGTIGIALNLESDNVGAVLMGEGLSIQEGSSVKATGKIAQIPVSDGYLGRVVNALARPIDGKGDIPASEFRLIESAAPGIISRRSVYEPMQTGLIAIDAMIPIGRGQRELIIGDRQTGKTAVATDTILNQKGNNVICVYVAIGQKASSVAQVLNTFEERGAMDYTIIVSEPANSPATLQYLAPYTGAALAEFFMYKGRHTLVIYDDLSKQAQAYRQMSLLLRRPPGREAYPGDVFYLHSRLLERAAKLNSQLGEGSMTALPIVETQAGDVSAYIPTNVISITDGQIFLSADLFNSGIRPAINVGISVSRVGSAAQIKAMKQVAGKLKLELAQFAELEAFSQFASDLDKATQNQLARGQRLRELLKQSQSSPLAVEDQVATIYTGVNGYLDILSVGQVRRFLVQLREYIASNKSEFTEIVKSTKTFTDKAEKILKEALQEYTELFLAQEELEKTKS.

170–177 (GDRQTGKT) contacts ATP.

It belongs to the ATPase alpha/beta chains family. F-type ATPases have 2 components, CF(1) - the catalytic core - and CF(0) - the membrane proton channel. CF(1) has five subunits: alpha(3), beta(3), gamma(1), delta(1), epsilon(1). CF(0) has four main subunits: a, b, b' and c.

Its subcellular location is the plastid. The protein localises to the chloroplast thylakoid membrane. The catalysed reaction is ATP + H2O + 4 H(+)(in) = ADP + phosphate + 5 H(+)(out). Functionally, produces ATP from ADP in the presence of a proton gradient across the membrane. The alpha chain is a regulatory subunit. The polypeptide is ATP synthase subunit alpha, chloroplastic (Chaetosphaeridium globosum (Charophycean green alga)).